The following is a 189-amino-acid chain: MASYSTNEFKGGLKILIDGNPMVIVENEFVKPGKGQAFNRVKLKNLLNDRVVEKTFKSGESVEAADVEELNAVYSYFDGDSYVFMHPETFEQYMVSQEALGETKKWLKDQDEYQIILFNGQPISIIAPNFVNLEIVETDPGLKGDTAGTGGKPATLSTGAVVRVPLFVQTGEIIKVDTRTSTYVSRVKD.

Lys-34 is modified (N6-(3,6-diaminohexanoyl)-5-hydroxylysine).

Belongs to the elongation factor P family. Post-translationally, may be beta-lysylated on the epsilon-amino group of Lys-34 by the combined action of EpmA and EpmB, and then hydroxylated on the C5 position of the same residue by EpmC (if this protein is present). Lysylation is critical for the stimulatory effect of EF-P on peptide-bond formation. The lysylation moiety may extend toward the peptidyltransferase center and stabilize the terminal 3-CCA end of the tRNA. Hydroxylation of the C5 position on Lys-34 may allow additional potential stabilizing hydrogen-bond interactions with the P-tRNA.

The protein localises to the cytoplasm. Its pathway is protein biosynthesis; polypeptide chain elongation. Its function is as follows. Involved in peptide bond synthesis. Alleviates ribosome stalling that occurs when 3 or more consecutive Pro residues or the sequence PPG is present in a protein, possibly by augmenting the peptidyl transferase activity of the ribosome. Modification of Lys-34 is required for alleviation. This is Elongation factor P from Francisella philomiragia subsp. philomiragia (strain ATCC 25017 / CCUG 19701 / FSC 153 / O#319-036).